The following is a 579-amino-acid chain: Thiol:disulfide interchange protein DsbD (579 aa).

The signal sequence occupies residues 1–16 (MKKLFLFFTLIFTAFA). 2 cysteine pairs are disulfide-bonded: Cys124–Cys129 and Cys193–Cys315. The next 8 membrane-spanning stretches (helical) occupy residues 178–198 (IFGF…LPML), 230–250 (LTYT…QIAL), 254–274 (YVMI…FGLF), 296–316 (GAFG…SPCT), 337–357 (AVTL…ITLF), 376–396 (FGFV…PEVW), 397–417 (ESRL…LQMS), and 420–440 (GFGY…VQPL). The region spanning 449-579 (TTTQSAVENM…AFSNWIEKLL (131 aa)) is the Thioredoxin domain. Residues Cys495 and Cys498 are joined by a disulfide bond.

This sequence belongs to the thioredoxin family. DsbD subfamily.

It localises to the cell inner membrane. The enzyme catalyses [protein]-dithiol + NAD(+) = [protein]-disulfide + NADH + H(+). The catalysed reaction is [protein]-dithiol + NADP(+) = [protein]-disulfide + NADPH + H(+). In terms of biological role, required to facilitate the formation of correct disulfide bonds in some periplasmic proteins and for the assembly of the periplasmic c-type cytochromes. Acts by transferring electrons from cytoplasmic thioredoxin to the periplasm. This transfer involves a cascade of disulfide bond formation and reduction steps. This Haemophilus influenzae (strain PittGG) protein is Thiol:disulfide interchange protein DsbD.